Consider the following 148-residue polypeptide: Calmodulin-4 (148 aa).

EF-hand domains are found at residues 8-43, 44-79, 80-115, and 116-148; these read EEVAEFQAAFNRFDKNKDGHISVEELGDVMKQLGKN, LPEKDLKALISKLDTDGDGKISFEEFLTAIEKYKKG, HRAGELRAVFNVLDQNGDGYITVDELKESLSKLGES, and LSQEELEDMIRVADVDQDGKVKYEEFVRLHVEN. Ca(2+) contacts are provided by D21, N23, D25, H27, E32, D57, D59, D61, K63, E68, D93, N95, D97, Y99, and E104.

Implicated in the early stage of ectopic ossification. This Mus musculus (Mouse) protein is Calmodulin-4 (Calm4).